The primary structure comprises 482 residues: Ubiquitin carboxyl-terminal hydrolase 6 (482 aa).

The Ubiquitin-like domain occupies 2–77 (PTVSVKWQKK…LMMMGTADEI (76 aa)). The USP domain maps to 104–478 (AGLVNLGNTC…MAYITMYKAR (375 aa)). Cys-113 functions as the Nucleophile in the catalytic mechanism. A calmodulin-binding region spans residues 172 to 191 (SQFWMVLRKKYPQFSQLQNG). Basic and acidic residues-rich tracts occupy residues 350–361 (PRQKLREEEGKK) and 371–381 (GSKDSDVKMTD). Residues 350–407 (PRQKLREEEGKKLGLQTSAKSGSKDSDVKMTDAEASANGSGESSTVNPQEGTSSEKET) form a disordered region. Positions 382–393 (AEASANGSGESS) are enriched in low complexity. The active-site Proton acceptor is His-430.

It belongs to the peptidase C19 family. As to quaternary structure, interacts with calmodulin (CaM).

It carries out the reaction Thiol-dependent hydrolysis of ester, thioester, amide, peptide and isopeptide bonds formed by the C-terminal Gly of ubiquitin (a 76-residue protein attached to proteins as an intracellular targeting signal).. Its function is as follows. Recognizes and hydrolyzes the peptide bond at the C-terminal Gly of ubiquitin. Involved in the processing of poly-ubiquitin precursors as well as that of ubiquitinated proteins. The chain is Ubiquitin carboxyl-terminal hydrolase 6 (UBP6) from Arabidopsis thaliana (Mouse-ear cress).